A 523-amino-acid polypeptide reads, in one-letter code: Bifunctional purine biosynthesis protein PurH (523 aa).

An MGS-like domain is found at 1–154 (MTATAGSNKR…KNHPSVAVVT (154 aa)).

Belongs to the PurH family.

The catalysed reaction is (6R)-10-formyltetrahydrofolate + 5-amino-1-(5-phospho-beta-D-ribosyl)imidazole-4-carboxamide = 5-formamido-1-(5-phospho-D-ribosyl)imidazole-4-carboxamide + (6S)-5,6,7,8-tetrahydrofolate. It catalyses the reaction IMP + H2O = 5-formamido-1-(5-phospho-D-ribosyl)imidazole-4-carboxamide. It participates in purine metabolism; IMP biosynthesis via de novo pathway; 5-formamido-1-(5-phospho-D-ribosyl)imidazole-4-carboxamide from 5-amino-1-(5-phospho-D-ribosyl)imidazole-4-carboxamide (10-formyl THF route): step 1/1. It functions in the pathway purine metabolism; IMP biosynthesis via de novo pathway; IMP from 5-formamido-1-(5-phospho-D-ribosyl)imidazole-4-carboxamide: step 1/1. This Streptomyces coelicolor (strain ATCC BAA-471 / A3(2) / M145) protein is Bifunctional purine biosynthesis protein PurH.